Consider the following 322-residue polypeptide: GRB2-related adaptor protein 2 (322 aa).

Residues 1 to 56 (MEATAKFDFMASGEDELSFRTGDILKILSNQEEWLKAELGSQEGYVPKNFIDIEFP) form the SH3 1 domain. Position 45 is a phosphotyrosine (tyrosine 45). The SH2 domain occupies 58 to 149 (WFHEGLSRHQ…QKQVFLRDGT (92 aa)). Lysine 106 carries the N6-acetyllysine modification. The disordered stretch occupies residues 143 to 216 (VFLRDGTQDQ…TPGPQPPQQQ (74 aa)). Basic and acidic residues predominate over residues 148 to 163 (GTQDQGHRGNSLDRRS). Position 186 is a phosphoserine (serine 186). Residues 193–204 (PQQFHPHQQPSP) show a composition bias toward low complexity. Serine 230 is modified (phosphoserine). Threonine 254 is modified (phosphothreonine). The SH3 2 domain maps to 263-322 (GRVRWARALYDFEALEEDELGFRSGEVVEVLDSSNPSWWTGRLHNKLGLFPANYVAPMMR).

The protein belongs to the GRB2/sem-5/DRK family. In terms of assembly, interacts with phosphorylated LAT and LAX1 upon TCR activation. Interacts with SHB. Interacts with PTPN23. Interacts with phosphorylated LIME1 upon TCR activation.

It is found in the nucleus. Its subcellular location is the cytoplasm. It localises to the endosome. Functionally, interacts with SLP-76 to regulate NF-AT activation. Binds to tyrosine-phosphorylated shc. The polypeptide is GRB2-related adaptor protein 2 (Grap2) (Mus musculus (Mouse)).